The following is a 301-amino-acid chain: Homeobox protein Hox-D13 (301 aa).

2 disordered regions span residues 1–20 (MDGL…TPGQ) and 55–75 (GERS…PGSG). Residues 8 to 18 (SSGGGGGGGTP) show a composition bias toward gly residues. Positions 234-293 (GRKKRVPYTKLQLKELENEYAINKFINKDKRRRISAATNLSERQVTIWFQNRRVKDKKIV) form a DNA-binding region, homeobox.

The protein belongs to the Abd-B homeobox family.

It is found in the nucleus. Functionally, sequence-specific transcription factor that binds gene promoters and activates their transcription. Part of a developmental regulatory system that provides cells with specific positional identities on the anterior-posterior axis. This Gallus gallus (Chicken) protein is Homeobox protein Hox-D13 (HOXD13).